The following is an 89-amino-acid chain: Elongation factor 1-beta (89 aa).

Belongs to the EF-1-beta/EF-1-delta family.

Functionally, promotes the exchange of GDP for GTP in EF-1-alpha/GDP, thus allowing the regeneration of EF-1-alpha/GTP that could then be used to form the ternary complex EF-1-alpha/GTP/AAtRNA. The protein is Elongation factor 1-beta of Methanosarcina barkeri (strain Fusaro / DSM 804).